The primary structure comprises 83 residues: U5-theraphotoxin-Hs1c (83 aa).

A signal peptide spans 1–21; the sequence is MKTSMFLTLTGLVLLFVVCYA. Positions 22-49 are excised as a propeptide; sequence SESEEKEFPKELLSSIFAADSDFKVEER. 3 disulfide bridges follow: cysteine 51/cysteine 63, cysteine 56/cysteine 68, and cysteine 62/cysteine 75.

The protein belongs to the neurotoxin 10 (Hwtx-1) family. 51 (Hntx-8) subfamily. Hntx-8 sub-subfamily. In terms of tissue distribution, expressed by the venom gland.

The protein localises to the secreted. Functionally, agglutinates erythrocytes. In Cyriopagopus schmidti (Chinese bird spider), this protein is U5-theraphotoxin-Hs1c.